Reading from the N-terminus, the 303-residue chain is Proteasome subunit beta (303 aa).

Positions 1 to 67 (MTWQFPDRLS…SGGTGQLPHG (67 aa)) are cleaved as a propeptide — removed in mature form; by autocatalysis. Threonine 68 (nucleophile) is an active-site residue.

Belongs to the peptidase T1B family. The 20S proteasome core is composed of 14 alpha and 14 beta subunits that assemble into four stacked heptameric rings, resulting in a barrel-shaped structure. The two inner rings, each composed of seven catalytic beta subunits, are sandwiched by two outer rings, each composed of seven alpha subunits. The catalytic chamber with the active sites is on the inside of the barrel. Has a gated structure, the ends of the cylinder being occluded by the N-termini of the alpha-subunits. Is capped by the proteasome-associated ATPase, ARC.

It localises to the cytoplasm. The catalysed reaction is Cleavage of peptide bonds with very broad specificity.. It functions in the pathway protein degradation; proteasomal Pup-dependent pathway. Its activity is regulated as follows. The formation of the proteasomal ATPase ARC-20S proteasome complex, likely via the docking of the C-termini of ARC into the intersubunit pockets in the alpha-rings, may trigger opening of the gate for substrate entry. Interconversion between the open-gate and close-gate conformations leads to a dynamic regulation of the 20S proteasome proteolysis activity. Component of the proteasome core, a large protease complex with broad specificity involved in protein degradation. This chain is Proteasome subunit beta, found in Mycolicibacterium paratuberculosis (strain ATCC BAA-968 / K-10) (Mycobacterium paratuberculosis).